Here is a 117-residue protein sequence, read N- to C-terminus: Large ribosomal subunit protein bL20 (117 aa).

It belongs to the bacterial ribosomal protein bL20 family.

Binds directly to 23S ribosomal RNA and is necessary for the in vitro assembly process of the 50S ribosomal subunit. It is not involved in the protein synthesizing functions of that subunit. In Gloeothece citriformis (strain PCC 7424) (Cyanothece sp. (strain PCC 7424)), this protein is Large ribosomal subunit protein bL20.